A 340-amino-acid chain; its full sequence is Predicted GPI-anchored protein 46 (340 aa).

An N-terminal signal peptide occupies residues 1–29 (MKILLIYSMTPKLVIWFTLFVLCLQMGDT). Positions 99–115 (SETTTTTTQESETSIAT) are enriched in low complexity. Disordered regions lie at residues 99–154 (SETT…SLSS) and 181–212 (MSSSSSSSSGSLRDKSKLKQENKQLQSRIKNY). A glycan (N-linked (GlcNAc...) asparagine) is linked at asparagine 127. Residues 182-191 (SSSSSSSSGS) are compositionally biased toward low complexity. Residues 192 to 202 (LRDKSKLKQEN) are compositionally biased toward basic and acidic residues. N-linked (GlcNAc...) asparagine glycosylation occurs at asparagine 270. Asparagine 314 carries the GPI-anchor amidated asparagine lipid modification. Positions 315-340 (SAPLLWIKISKPTVCLVIALTFLLLG) are cleaved as a propeptide — removed in mature form.

The protein resides in the cell membrane. The protein localises to the secreted. The polypeptide is Predicted GPI-anchored protein 46 (PGA46) (Candida albicans (strain SC5314 / ATCC MYA-2876) (Yeast)).